The following is a 429-amino-acid chain: Adenylosuccinate synthetase (429 aa).

Residues 12-18 (GDEGKGK) and 40-42 (GHT) each bind GTP. The active-site Proton acceptor is D13. Mg(2+) is bound by residues D13 and G40. Residues 13–16 (DEGK), 38–41 (NAGH), T129, R143, Q224, T239, and R303 contribute to the IMP site. The active-site Proton donor is the H41. 299–305 (VTTGRAR) provides a ligand contact to substrate. GTP-binding positions include R305, 331-333 (KLD), and 413-415 (GVG).

It belongs to the adenylosuccinate synthetase family. Homodimer. Requires Mg(2+) as cofactor.

The protein resides in the cytoplasm. It carries out the reaction IMP + L-aspartate + GTP = N(6)-(1,2-dicarboxyethyl)-AMP + GDP + phosphate + 2 H(+). The protein operates within purine metabolism; AMP biosynthesis via de novo pathway; AMP from IMP: step 1/2. Its function is as follows. Plays an important role in the de novo pathway of purine nucleotide biosynthesis. Catalyzes the first committed step in the biosynthesis of AMP from IMP. This is Adenylosuccinate synthetase from Rhodococcus opacus (strain B4).